The primary structure comprises 438 residues: Keratin, type I cytoskeletal 18 (438 aa).

A head region spans residues 4–83 (AVSSRSTVVS…TLSGNAVISN (80 aa)). A coil 1A region spans residues 84–119 (EKETMQDLNDRLSNYLETVRRLENANQQLEIQIREA). The 312-residue stretch at 84–395 (EKETMQDLND…HLLGGEDSDT (312 aa)) folds into the IF rod domain. Residues 120 to 136 (MEKRGPSVRDYSNYEKI) are linker 1. Residues 137-228 (IKELRDQIYD…KNHEDEVIAL (92 aa)) are coil 1B. The interval 229 to 252 (RNQVNSCGVQVDLDAPKGTDLAEI) is linker 12. Positions 253-393 (MATLRAEYEA…YRHLLGGEDS (141 aa)) are coil 2. The interval 394 to 438 (DTLSLQDALSAMKVSNVQTVQKIVVTTQKLVDGKVVEDSTVTETK) is tail.

It belongs to the intermediate filament family. Heterotetramer of two type I and two type II keratins. Keratin-18 associates with keratin-8. In terms of processing, phosphorylated. Post-translationally, proteolytically cleaved by caspases during epithelial cell apoptosis. In terms of tissue distribution, expressed at low levels in skin.

In terms of biological role, when phosphorylated, plays a role in filament reorganization. The chain is Keratin, type I cytoskeletal 18 from Protopterus aethiopicus (Marbled lungfish).